A 36-amino-acid chain; its full sequence is Lambda-hexatoxin-Hv1b (36 aa).

4 cysteine pairs are disulfide-bonded: C3-C17, C10-C22, C13-C14, and C16-C33.

This sequence belongs to the neurotoxin 11 (kappa toxin) family. Expressed by the venom gland.

It localises to the secreted. Functionally, this excitatory toxin inhibits insect calcium-activated potassium (KCa) channels (Slo-type). The chain is Lambda-hexatoxin-Hv1b from Hadronyche versuta (Blue mountains funnel-web spider).